The following is a 411-amino-acid chain: Tyrosine--tRNA ligase (411 aa).

Y34 contacts L-tyrosine. The 'HIGH' region motif lies at C39 to S48. L-tyrosine is bound by residues Y171 and Q175. The short motif at K231–T235 is the 'KMSKS' region element. Residue K234 coordinates ATP. In terms of domain architecture, S4 RNA-binding spans I345 to V411.

This sequence belongs to the class-I aminoacyl-tRNA synthetase family. TyrS type 1 subfamily. As to quaternary structure, homodimer.

The protein localises to the cytoplasm. It catalyses the reaction tRNA(Tyr) + L-tyrosine + ATP = L-tyrosyl-tRNA(Tyr) + AMP + diphosphate + H(+). Its function is as follows. Catalyzes the attachment of tyrosine to tRNA(Tyr) in a two-step reaction: tyrosine is first activated by ATP to form Tyr-AMP and then transferred to the acceptor end of tRNA(Tyr). The protein is Tyrosine--tRNA ligase of Rickettsia typhi (strain ATCC VR-144 / Wilmington).